Here is a 470-residue protein sequence, read N- to C-terminus: MSTPTLTLSEDRLLPRESSALAAAREIYRSTKGLPIISPHGHVPVSWIADDMAFSDPTSLLITPDHYVNRLLHANGVDLEDLGVGRKTMSEEDNRRAFRILCEHWRDFAGTAMRYWLVDQLIGIFGITERPSPENADRIYDTIAERIAQPDFLPRALMDSFDIAFIATTDDPCDDLDGHARLAADETFTRRVAPTFRPDKYLEPAAGGWTGLLARLSEVSGCDATTLDGFTEAMEDRRAYFRQHGAVSSDHSHRDLGTIILDHDRAASIFDASVAGRATVEEMALLRRHLFTDQARMASEDGLTMTVHPAVHRNHDTAAFHRFGADIGSDVPVTLEVVDSLHPLLDKFGNTDLKLVVFTIDETLYSREIAPLSGWYRSLYIGVPWWFIDAPESVMRFKHAVTEMAGFSRVSGMIDDTRAFCSIPARHDMSRRLDAAHLAELVVLGRLDLDEAVEIAHRLVVEQPTQVFGL.

This sequence belongs to the metallo-dependent hydrolases superfamily. Uronate isomerase family.

It catalyses the reaction D-glucuronate = D-fructuronate. The catalysed reaction is aldehydo-D-galacturonate = keto-D-tagaturonate. It participates in carbohydrate metabolism; pentose and glucuronate interconversion. The chain is Uronate isomerase from Cutibacterium acnes (strain DSM 16379 / KPA171202) (Propionibacterium acnes).